A 111-amino-acid polypeptide reads, in one-letter code: Cryptic phage CTXphi transcriptional repressor RstR (111 aa).

The HTH cro/C1-type domain maps to 6-60; the sequence is IRDLRVERDLNQEEVANGIGVGKNTYLAYEKGTQSPKLETVEKLAKFYGVPIAEL. The segment at residues 17 to 36 is a DNA-binding region (H-T-H motif); that stretch reads QEEVANGIGVGKNTYLAYEK.

In terms of biological role, transcriptional repressor of the integrated CTXPhi phage gene rstA2. This Vibrio cholerae protein is Cryptic phage CTXphi transcriptional repressor RstR (rstR).